Consider the following 138-residue polypeptide: Nucleoside diphosphate kinase (138 aa).

Positions 10, 58, 86, 92, 103, and 113 each coordinate ATP. Residue H116 is the Pros-phosphohistidine intermediate of the active site.

Belongs to the NDK family. Homotetramer. It depends on Mg(2+) as a cofactor.

Its subcellular location is the cytoplasm. It carries out the reaction a 2'-deoxyribonucleoside 5'-diphosphate + ATP = a 2'-deoxyribonucleoside 5'-triphosphate + ADP. It catalyses the reaction a ribonucleoside 5'-diphosphate + ATP = a ribonucleoside 5'-triphosphate + ADP. Functionally, major role in the synthesis of nucleoside triphosphates other than ATP. The ATP gamma phosphate is transferred to the NDP beta phosphate via a ping-pong mechanism, using a phosphorylated active-site intermediate. The protein is Nucleoside diphosphate kinase of Glaesserella parasuis serovar 5 (strain SH0165) (Haemophilus parasuis).